A 456-amino-acid polypeptide reads, in one-letter code: Gamma-glutamyl phosphate reductase (456 aa).

Ser-2 carries the post-translational modification N-acetylserine.

This sequence belongs to the gamma-glutamyl phosphate reductase family.

The enzyme catalyses L-glutamate 5-semialdehyde + phosphate + NADP(+) = L-glutamyl 5-phosphate + NADPH + H(+). It functions in the pathway amino-acid biosynthesis; L-proline biosynthesis; L-glutamate 5-semialdehyde from L-glutamate: step 2/2. Catalyzes the NADPH dependent reduction of L-gamma-glutamyl 5-phosphate into L-glutamate 5-semialdehyde and phosphate. The product spontaneously undergoes cyclization to form 1-pyrroline-5-carboxylate. This chain is Gamma-glutamyl phosphate reductase (PRO2), found in Saccharomyces cerevisiae (strain ATCC 204508 / S288c) (Baker's yeast).